The primary structure comprises 629 residues: Coiled-coil domain-containing protein 93 (629 aa).

Positions 1-23 (MGLPKGPEGQGLPEVETREDEEQ) are disordered. The tract at residues 1–428 (MGLPKGPEGQ…ETLKAERAPG (428 aa)) is sufficient for interaction with CCDC22. 2 coiled-coil regions span residues 231-430 (LSAA…PGEK) and 558-599 (LRQM…LLEK). 3 positions are modified to phosphoserine: S298, S301, and S305. Residues 446-629 (THNEDLDRRY…LLSKIKAKAS (184 aa)) are sufficient for interaction with WASHC2C.

This sequence belongs to the CCDC93 family. As to quaternary structure, component of the commander complex consisting of the CCC subcomplex and the retriever subcomplex. Component of the CCC (COMMD/CCDC22/CCDC93) subcomplex consisting of COMMD1, COMMD2, COMMD3, COMMD4, COMMD5, COMMD6, COMMD7, COMMD8, COMMD9, COMMD10, CCDC22 and CCDC93. Forms a coiled-coil heterodimer with CCDC22; this heterodimer interacts with the guanine nucleotide exchange factor DENND10; the interaction is direct. Interacts with WASHC1. Interacts directly with WASHC2C. Interacts with SNX17 and SNX31.

The protein localises to the early endosome. Component of the commander complex that is essential for endosomal recycling of transmembrane cargos; the commander complex is composed of composed of the CCC subcomplex and the retriever subcomplex. Component of the CCC complex, which is involved in the regulation of endosomal recycling of surface proteins, including integrins, signaling receptor and channels. The CCC complex associates with SNX17, retriever and WASH complexes to prevent lysosomal degradation and promote cell surface recycling of numerous cargos such as integrins ITGA5:ITGB1. Involved in copper-dependent ATP7A trafficking between the trans-Golgi network and vesicles in the cell periphery; the function is proposed to depend on its association within the CCC complex and cooperation with the WASH complex on early endosomes and is dependent on its interaction with WASHC2C. This chain is Coiled-coil domain-containing protein 93 (Ccdc93), found in Mus musculus (Mouse).